A 161-amino-acid chain; its full sequence is Large ribosomal subunit protein uL15 (161 aa).

Residues 1 to 43 are disordered; the sequence is MKLSEISDNPGARKKRMRIGRGIGSGKGKTGGRGGKGQTARSG. A compositionally biased stretch (gly residues) spans 21–37; that stretch reads RGIGSGKGKTGGRGGKG.

The protein belongs to the universal ribosomal protein uL15 family. In terms of assembly, part of the 50S ribosomal subunit.

Binds to the 23S rRNA. The chain is Large ribosomal subunit protein uL15 from Rhodopseudomonas palustris (strain HaA2).